Consider the following 104-residue polypeptide: Membrane magnesium transporter (104 aa).

Residues 1–2 are Cytoplasmic-facing; sequence MN. Residues 3 to 23 traverse the membrane as a helical segment; the sequence is LGFLVGVFGVLILSHAAYSTI. Over 24 to 40 the chain is Lumenal; the sequence is QYRGLLKIMEEEFSRPP. A helical transmembrane segment spans residues 41 to 61; the sequence is INVILELIIGLALCMWAALTF. At 62–104 the chain is on the cytoplasmic side; that stretch reads PGKFLSIHPDSDENRAVFLPDNSDFMIFNHRGRLFPPQIDMKF.

It belongs to the membrane magnesium transporter (TC 1.A.67) family. As to quaternary structure, component of the ER membrane protein complex (EMC).

It localises to the endoplasmic reticulum membrane. It is found in the golgi apparatus membrane. Its subcellular location is the early endosome membrane. In terms of biological role, mediates Mg(2+) transport. This is Membrane magnesium transporter from Arabidopsis thaliana (Mouse-ear cress).